The following is a 131-amino-acid chain: Class I hydrophobin 9 (131 aa).

Residues 1-23 (MFARRAISIFAFMLVALSIFAAA) form the signal peptide. Intrachain disulfides connect Cys-52-Cys-112, Cys-59-Cys-106, Cys-60-Cys-93, and Cys-113-Cys-126. The N-linked (GlcNAc...) asparagine glycan is linked to Asn-53. Asn-115 is a glycosylation site (N-linked (GlcNAc...) asparagine).

It belongs to the fungal hydrophobin family. In terms of assembly, self-assembles to form functional amyloid fibrils called rodlets. Self-assembly into fibrillar rodlets occurs spontaneously at hydrophobic:hydrophilic interfaces and the rodlets further associate laterally to form amphipathic monolayers.

The protein resides in the secreted. It is found in the cell wall. Its function is as follows. Aerial growth, conidiation, and dispersal of filamentous fungi in the environment rely upon a capability of their secreting small amphipathic proteins called hydrophobins (HPBs) with low sequence identity. Class I can self-assemble into an outermost layer of rodlet bundles on aerial cell surfaces, conferring cellular hydrophobicity that supports fungal growth, development and dispersal; whereas Class II form highly ordered films at water-air interfaces through intermolecular interactions but contribute nothing to the rodlet structure. The protein is Class I hydrophobin 9 of Flammulina velutipes (Agaricus velutipes).